Consider the following 266-residue polypeptide: Ankyrin repeat domain-containing protein 45 (266 aa).

Acidic residues-rich tracts occupy residues 1–11 and 18–32; these read MESEGPPESES and QEEENEEEEAQEPEE. The interval 1-43 is disordered; that stretch reads MESEGPPESESSEFFSQQEEENEEEEAQEPEETGPKNPLLQPA. ANK repeat units follow at residues 76 to 105 and 109 to 138; these read VGRNLLYAACMAGQSDVIRALAKYGVNLNE and RGYTLLHCAAAWGRLETLKALVELDVDIEA.

It is found in the cytoplasm. Its subcellular location is the midbody. The protein localises to the midbody ring. The protein resides in the cleavage furrow. In terms of biological role, may play a role during cell division. This Homo sapiens (Human) protein is Ankyrin repeat domain-containing protein 45.